A 1875-amino-acid polypeptide reads, in one-letter code: Protein MLP1 (1875 aa).

Serine 2 bears the N-acetylserine mark. Coiled coils occupy residues 69-487 (ELKA…IQYL) and 531-1678 (ERLV…SAES). The residue at position 337 (threonine 337) is a Phosphothreonine. Serine 379 is subject to Phosphoserine. The short motif at 1496 to 1565 (QPSNINMEEI…EEKVEERIKS (70 aa)) is the Required for nuclear localization element. Positions 1641-1689 (KKSFDEGKQQAMMKTTLLERKLAKMESQLSETKQSAESPPKSVNNVQNP) are disordered. Polar residues predominate over residues 1667–1688 (SQLSETKQSAESPPKSVNNVQN). Serine 1670 and serine 1710 each carry phosphoserine. Over residues 1716 to 1725 (KLNSKSSSGG) the composition is skewed to low complexity. Residues 1716–1875 (KLNSKSSSGG…TDKVNDENSI (160 aa)) are disordered. Residues 1728–1737 (PFTSPSPNKH) are compositionally biased toward polar residues. Residue serine 1733 is modified to Phosphoserine. Positions 1738–1748 (LQNDNDKRESL) are enriched in basic and acidic residues. Over residues 1787 to 1801 (TSNNPAQKDSSNRNV) the composition is skewed to polar residues. A Phosphoserine modification is found at serine 1803. Basic and acidic residues-rich tracts occupy residues 1807 to 1840 (TEKK…GELK) and 1865 to 1875 (ETDKVNDENSI). Positions 1834 to 1866 (DEVGELKNDEDDTTENINESKKIKTEDEEEKET) form a coiled coil.

As to quaternary structure, component of the nuclear pore complex (NPC). NPC constitutes the exclusive means of nucleocytoplasmic transport. NPCs allow the passive diffusion of ions and small molecules and the active, nuclear transport receptor-mediated bidirectional transport of macromolecules such as proteins, RNAs, ribonucleoparticles (RNPs), and ribosomal subunits across the nuclear envelope. Due to its 8-fold rotational symmetry, all subunits are present with 8 copies or multiples thereof. Interacts with NAB2, a hnRNP required for mRNA export. Interacts with MLP2. Post-translationally, may be phosphorylated by CDC28.

It localises to the nucleus. The protein localises to the nuclear pore complex. Together with the closely related MLP2, involved in the structural and functional organization of perinuclear chromatin. Together with MLP2, associates with the nuclear pore complex and form filamentous structures along the nuclear periphery. Has a role in the localization of Esc1 to nucleolar regions. Together with MLP2, mediates tethering of the some telomeres to the nuclear periphery, probably mediated by YKU70/YKU80 (HDF1/HDF2) heterodimer and show perinuclear location dependent silencing. MLP1 and MLP2 are involved in telomere length regulation but not silencing or telomere anchoring. Recognizes the 5'-splice site of pre-mRNAs and retains unspliced pre-mRNA in the nucleus without affecting splicing itself. This Saccharomyces cerevisiae (strain ATCC 204508 / S288c) (Baker's yeast) protein is Protein MLP1 (MLP1).